We begin with the raw amino-acid sequence, 125 residues long: AENNLKLPKLAEKDKCFQSQFNQETCMTRITTGLQEFQIHLKYLEANYEGNKNNAHSVYISTKHLLQKLRPMNQVEVTTPNPTTDSSLQALFKSQDKWLKHVTIHLILRSLEDFLQFSLRAIRIM.

A disulfide bridge links Cys-16 with Cys-26.

Belongs to the IL-6 superfamily. As to quaternary structure, component of a hexamer of two molecules each of IL6, IL6R and IL6ST; first binds to IL6R to associate with the signaling subunit IL6ST. Interacts with IL6R (via the N-terminal ectodomain); this interaction may be affected by IL6R-binding with SORL1, hence decreasing IL6 cis signaling. Interacts with SORL1 (via the N-terminal ectodomain); this interaction leads to IL6 internalization and lysosomal degradation. May form a trimeric complex with the soluble SORL1 ectodomain and soluble IL6R receptor; this interaction might stabilize circulating IL6, hence promoting IL6 trans signaling.

It is found in the secreted. In terms of biological role, cytokine with a wide variety of biological functions in immunity, tissue regeneration, and metabolism. Binds to IL6R, then the complex associates to the signaling subunit IL6ST/gp130 to trigger the intracellular IL6-signaling pathway. The interaction with the membrane-bound IL6R and IL6ST stimulates 'classic signaling', whereas the binding of IL6 and soluble IL6R to IL6ST stimulates 'trans-signaling'. Alternatively, 'cluster signaling' occurs when membrane-bound IL6:IL6R complexes on transmitter cells activate IL6ST receptors on neighboring receiver cells. Its function is as follows. IL6 is a potent inducer of the acute phase response. Rapid production of IL6 contributes to host defense during infection and tissue injury, but excessive IL6 synthesis is involved in disease pathology. In the innate immune response, is synthesized by myeloid cells, such as macrophages and dendritic cells, upon recognition of pathogens through toll-like receptors (TLRs) at the site of infection or tissue injury. In the adaptive immune response, is required for the differentiation of B cells into immunoglobulin-secreting cells. Plays a major role in the differentiation of CD4(+) T cell subsets. Essential factor for the development of T follicular helper (Tfh) cells that are required for the induction of germinal-center formation. Required to drive naive CD4(+) T cells to the Th17 lineage. Also required for proliferation of myeloma cells and the survival of plasmablast cells. Acts as an essential factor in bone homeostasis and on vessels directly or indirectly by induction of VEGF, resulting in increased angiogenesis activity and vascular permeability. Induces, through 'trans-signaling' and synergistically with IL1B and TNF, the production of VEGF. Involved in metabolic controls, is discharged into the bloodstream after muscle contraction increasing lipolysis and improving insulin resistance. 'Trans-signaling' in central nervous system also regulates energy and glucose homeostasis. Mediates, through GLP-1, crosstalk between insulin-sensitive tissues, intestinal L cells and pancreatic islets to adapt to changes in insulin demand. Also acts as a myokine. Plays a protective role during liver injury, being required for maintenance of tissue regeneration. Also has a pivotal role in iron metabolism by regulating HAMP/hepcidin expression upon inflammation or bacterial infection. Through activation of IL6ST-YAP-NOTCH pathway, induces inflammation-induced epithelial regeneration. The chain is Interleukin-6 (IL6) from Neovison vison (American mink).